The chain runs to 279 residues: DegV domain-containing protein CPE1310 (279 aa).

Residues 4–277 (IKIITDSTCD…PKVCALFYVE (274 aa)) form the DegV domain. Residues T62 and S94 each contribute to the hexadecanoate site.

Functionally, may bind long-chain fatty acids, such as palmitate, and may play a role in lipid transport or fatty acid metabolism. This chain is DegV domain-containing protein CPE1310, found in Clostridium perfringens (strain 13 / Type A).